A 386-amino-acid chain; its full sequence is Protein phosphatase methylesterase 1 (386 aa).

The segment at 1-38 (MSALEKSMHLGRLPSRPPLPGSGGSQSGAKMRMGPGRK) is disordered. At Ser-15 the chain carries Phosphoserine. Asymmetric dimethylarginine; alternate is present on Arg-16. Arg-16 carries the post-translational modification Omega-N-methylarginine; alternate. Residue Ser-156 is part of the active site. Residues 255 to 265 (IEEEEEDEEGS) show a composition bias toward acidic residues. A disordered region spans residues 255–280 (IEEEEEDEEGSESVNKRKKEDDMETK). Residues 268-280 (VNKRKKEDDMETK) show a composition bias toward basic and acidic residues. Residue His-349 is part of the active site.

The protein belongs to the AB hydrolase superfamily. Binds PPP2CA and PPP2CB. Phosphorylated by SIK1 following increases in intracellular sodium, leading to dissociation from the protein phosphatase 2A (PP2A) complex and subsequent dephosphorylation of sodium/potassium-transporting ATPase ATP1A1.

It catalyses the reaction [phosphatase 2A protein]-C-terminal L-leucine methyl ester + H2O = [phosphatase 2A protein]-C-terminal L-leucine + methanol + H(+). Functionally, demethylates proteins that have been reversibly carboxymethylated. Demethylates PPP2CB (in vitro) and PPP2CA. Binding to PPP2CA displaces the manganese ion and inactivates the enzyme. The polypeptide is Protein phosphatase methylesterase 1 (Ppme1) (Rattus norvegicus (Rat)).